The primary structure comprises 140 residues: uncharacterized protein (140 aa).

This is an uncharacterized protein from Acholeplasma phage L2 (Bacteriophage L2).